Consider the following 493-residue polypeptide: Glutamyl-tRNA(Gln) amidotransferase subunit A (493 aa).

Catalysis depends on charge relay system residues Lys78 and Ser158. The active-site Acyl-ester intermediate is the Ser182.

It belongs to the amidase family. GatA subfamily. In terms of assembly, heterotrimer of A, B and C subunits.

It carries out the reaction L-glutamyl-tRNA(Gln) + L-glutamine + ATP + H2O = L-glutaminyl-tRNA(Gln) + L-glutamate + ADP + phosphate + H(+). Its function is as follows. Allows the formation of correctly charged Gln-tRNA(Gln) through the transamidation of misacylated Glu-tRNA(Gln) in organisms which lack glutaminyl-tRNA synthetase. The reaction takes place in the presence of glutamine and ATP through an activated gamma-phospho-Glu-tRNA(Gln). The sequence is that of Glutamyl-tRNA(Gln) amidotransferase subunit A from Rickettsia felis (strain ATCC VR-1525 / URRWXCal2) (Rickettsia azadi).